The sequence spans 371 residues: Alginate lyase (371 aa).

The first 26 residues, 1–26 (MQSTDLKRLLIPSLLGLAIVTGSAQA), serve as a signal peptide directing secretion. Substrate-binding positions include 67–68 (SK), 140–141 (HT), and Tyr-258.

Belongs to the polysaccharide lyase 5 family.

It is found in the periplasm. The enzyme catalyses Eliminative cleavage of alginate to give oligosaccharides with 4-deoxy-alpha-L-erythro-hex-4-enuronosyl groups at their non-reducing ends and beta-D-mannuronate at their reducing end.. Functionally, catalyzes the depolymerization of alginate by cleaving the beta-1,4 glycosidic bond between two adjacent sugar residues via a beta-elimination mechanism. May serve to degrade mislocalized alginate that is trapped in the periplasmic space. The polypeptide is Alginate lyase (Pseudomonas fluorescens (strain ATCC BAA-477 / NRRL B-23932 / Pf-5)).